A 287-amino-acid chain; its full sequence is Mitochondrial glycine transporter B (287 aa).

3 Solcar repeats span residues 7–97 (HPAL…LKQH), 104–188 (PSAG…AKKA), and 198–282 (IAPL…LMAR). 6 consecutive transmembrane segments (helical) span residues 13–38 (FMCGSLSGTCSTLLFQPLDLVKTRLQ), 72–98 (GVSPSFMRCIPGVGIYFSTFYSLKQHY), 110–135 (VLLGAGARCVAGVAMLPFTVIKTRFE), 163–186 (GLTATLLRDAPFSGIYVMFYSQAK), 202–228 (VNFGCGVVAGILASLATQPADVIKTHM), and 257–275 (GAVPRSLRRTLMAAMAWTV).

Belongs to the mitochondrial carrier (TC 2.A.29) family. SLC25A38 subfamily. In terms of tissue distribution, at 24 hours post-fertilization, expressed predominantly in posterior blood island, posterior cardinal vein and circulating blood. At 34 hours post-fertilization, becomes restricted to posterior blood island and circulating blood.

The protein localises to the mitochondrion inner membrane. It carries out the reaction glycine(in) = glycine(out). In terms of biological role, mitochondrial glycine transporter that imports glycine into the mitochondrial matrix. Plays an important role in providing glycine for the first enzymatic step in heme biosynthesis, the condensation of glycine with succinyl-CoA to produce 5-aminolevulinate (ALA) in the mitochondrial matrix. Required during erythropoiesis. Functionally, may play a role as pro-apoptotic protein that induces caspase-dependent apoptosis. This is Mitochondrial glycine transporter B (slc25a38b) from Danio rerio (Zebrafish).